The chain runs to 118 residues: Ribonuclease P protein component (118 aa).

Belongs to the RnpA family. In terms of assembly, consists of a catalytic RNA component (M1 or rnpB) and a protein subunit.

The catalysed reaction is Endonucleolytic cleavage of RNA, removing 5'-extranucleotides from tRNA precursor.. RNaseP catalyzes the removal of the 5'-leader sequence from pre-tRNA to produce the mature 5'-terminus. It can also cleave other RNA substrates such as 4.5S RNA. The protein component plays an auxiliary but essential role in vivo by binding to the 5'-leader sequence and broadening the substrate specificity of the ribozyme. This chain is Ribonuclease P protein component, found in Shewanella sp. (strain ANA-3).